A 350-amino-acid polypeptide reads, in one-letter code: Methylthioribose-1-phosphate isomerase (350 aa).

Substrate is bound by residues R48–A50, R93, and Q198. Residue D239 is the Proton donor of the active site. Residue N249–K250 coordinates substrate.

The protein belongs to the eIF-2B alpha/beta/delta subunits family. MtnA subfamily.

The enzyme catalyses 5-(methylsulfanyl)-alpha-D-ribose 1-phosphate = 5-(methylsulfanyl)-D-ribulose 1-phosphate. Its pathway is amino-acid biosynthesis; L-methionine biosynthesis via salvage pathway; L-methionine from S-methyl-5-thio-alpha-D-ribose 1-phosphate: step 1/6. In terms of biological role, catalyzes the interconversion of methylthioribose-1-phosphate (MTR-1-P) into methylthioribulose-1-phosphate (MTRu-1-P). The protein is Methylthioribose-1-phosphate isomerase of Fervidobacterium nodosum (strain ATCC 35602 / DSM 5306 / Rt17-B1).